We begin with the raw amino-acid sequence, 361 residues long: tRNA-specific 2-thiouridylase MnmA (361 aa).

ATP-binding positions include 8–15 and Met-34; that span reads GMSGGVDS. Residues 94–96 form an interaction with target base in tRNA region; sequence NPD. The active-site Nucleophile is Cys-99. Residues Cys-99 and Cys-195 are joined by a disulfide bond. Gly-123 lines the ATP pocket. The interval 145 to 147 is interaction with tRNA; sequence KDQ. The active-site Cysteine persulfide intermediate is Cys-195. The segment at 307 to 308 is interaction with tRNA; it reads RY.

Belongs to the MnmA/TRMU family.

The protein localises to the cytoplasm. It carries out the reaction S-sulfanyl-L-cysteinyl-[protein] + uridine(34) in tRNA + AH2 + ATP = 2-thiouridine(34) in tRNA + L-cysteinyl-[protein] + A + AMP + diphosphate + H(+). Its function is as follows. Catalyzes the 2-thiolation of uridine at the wobble position (U34) of tRNA, leading to the formation of s(2)U34. This is tRNA-specific 2-thiouridylase MnmA from Legionella pneumophila subsp. pneumophila (strain Philadelphia 1 / ATCC 33152 / DSM 7513).